The following is a 41-amino-acid chain: uncharacterized protein (41 aa).

Residues 10–32 (LIILAVPFMIKTSLKTNLIFFFL) form a helical membrane-spanning segment.

It is found in the cell inner membrane. This is an uncharacterized protein from Escherichia coli (strain K12).